Consider the following 206-residue polypeptide: Small ribosomal subunit protein uS4 (206 aa).

The region spanning 96–158 is the S4 RNA-binding domain; it reads GRLDNVVYRM…AKQQSRIKAA (63 aa).

This sequence belongs to the universal ribosomal protein uS4 family. Part of the 30S ribosomal subunit. Contacts protein S5. The interaction surface between S4 and S5 is involved in control of translational fidelity.

Functionally, one of the primary rRNA binding proteins, it binds directly to 16S rRNA where it nucleates assembly of the body of the 30S subunit. With S5 and S12 plays an important role in translational accuracy. This Aliivibrio fischeri (strain ATCC 700601 / ES114) (Vibrio fischeri) protein is Small ribosomal subunit protein uS4.